We begin with the raw amino-acid sequence, 353 residues long: UDP-3-O-acylglucosamine N-acyltransferase (353 aa).

The Proton acceptor role is filled by H246.

The protein belongs to the transferase hexapeptide repeat family. LpxD subfamily. Homotrimer.

It catalyses the reaction a UDP-3-O-[(3R)-3-hydroxyacyl]-alpha-D-glucosamine + a (3R)-hydroxyacyl-[ACP] = a UDP-2-N,3-O-bis[(3R)-3-hydroxyacyl]-alpha-D-glucosamine + holo-[ACP] + H(+). It participates in bacterial outer membrane biogenesis; LPS lipid A biosynthesis. In terms of biological role, catalyzes the N-acylation of UDP-3-O-acylglucosamine using 3-hydroxyacyl-ACP as the acyl donor. Is involved in the biosynthesis of lipid A, a phosphorylated glycolipid that anchors the lipopolysaccharide to the outer membrane of the cell. This chain is UDP-3-O-acylglucosamine N-acyltransferase, found in Chlorobaculum tepidum (strain ATCC 49652 / DSM 12025 / NBRC 103806 / TLS) (Chlorobium tepidum).